A 359-amino-acid chain; its full sequence is Glycerol-3-phosphate dehydrogenase [NAD(P)+] (359 aa).

Residues T11, W12, R32, and K107 each contribute to the NADPH site. Sn-glycerol 3-phosphate-binding residues include K107 and G138. A142 contributes to the NADPH binding site. The sn-glycerol 3-phosphate site is built by K193, D246, S256, R257, and N258. K193 acts as the Proton acceptor in catalysis. Residue R257 coordinates NADPH. NADPH-binding residues include V281 and E283.

The protein belongs to the NAD-dependent glycerol-3-phosphate dehydrogenase family.

Its subcellular location is the cytoplasm. It catalyses the reaction sn-glycerol 3-phosphate + NAD(+) = dihydroxyacetone phosphate + NADH + H(+). The enzyme catalyses sn-glycerol 3-phosphate + NADP(+) = dihydroxyacetone phosphate + NADPH + H(+). The protein operates within membrane lipid metabolism; glycerophospholipid metabolism. In terms of biological role, catalyzes the reduction of the glycolytic intermediate dihydroxyacetone phosphate (DHAP) to sn-glycerol 3-phosphate (G3P), the key precursor for phospholipid synthesis. In Dehalococcoides mccartyi (strain ATCC BAA-2266 / KCTC 15142 / 195) (Dehalococcoides ethenogenes (strain 195)), this protein is Glycerol-3-phosphate dehydrogenase [NAD(P)+].